A 381-amino-acid polypeptide reads, in one-letter code: Arginine biosynthesis bifunctional protein ArgJ (381 aa).

Thr-143, Lys-165, Thr-176, Glu-255, Asn-376, and Thr-381 together coordinate substrate. Catalysis depends on Thr-176, which acts as the Nucleophile.

Belongs to the ArgJ family. As to quaternary structure, heterotetramer of two alpha and two beta chains.

The protein localises to the cytoplasm. It catalyses the reaction N(2)-acetyl-L-ornithine + L-glutamate = N-acetyl-L-glutamate + L-ornithine. It carries out the reaction L-glutamate + acetyl-CoA = N-acetyl-L-glutamate + CoA + H(+). The protein operates within amino-acid biosynthesis; L-arginine biosynthesis; L-ornithine and N-acetyl-L-glutamate from L-glutamate and N(2)-acetyl-L-ornithine (cyclic): step 1/1. It functions in the pathway amino-acid biosynthesis; L-arginine biosynthesis; N(2)-acetyl-L-ornithine from L-glutamate: step 1/4. Functionally, catalyzes two activities which are involved in the cyclic version of arginine biosynthesis: the synthesis of N-acetylglutamate from glutamate and acetyl-CoA as the acetyl donor, and of ornithine by transacetylation between N(2)-acetylornithine and glutamate. The chain is Arginine biosynthesis bifunctional protein ArgJ from Thermus thermophilus (strain ATCC BAA-163 / DSM 7039 / HB27).